Reading from the N-terminus, the 105-residue chain is Small ribosomal subunit protein uS10 (105 aa).

Belongs to the universal ribosomal protein uS10 family. In terms of assembly, part of the 30S ribosomal subunit.

Involved in the binding of tRNA to the ribosomes. This chain is Small ribosomal subunit protein uS10, found in Bdellovibrio bacteriovorus (strain ATCC 15356 / DSM 50701 / NCIMB 9529 / HD100).